We begin with the raw amino-acid sequence, 118 residues long: Large ribosomal subunit protein bL20 (118 aa).

It belongs to the bacterial ribosomal protein bL20 family.

In terms of biological role, binds directly to 23S ribosomal RNA and is necessary for the in vitro assembly process of the 50S ribosomal subunit. It is not involved in the protein synthesizing functions of that subunit. This chain is Large ribosomal subunit protein bL20, found in Marinomonas sp. (strain MWYL1).